We begin with the raw amino-acid sequence, 657 residues long: Glycogen debranching enzyme (657 aa).

Catalysis depends on aspartate 336, which acts as the Nucleophile. The active-site Proton donor is glutamate 371. The tract at residues alanine 460 to lysine 479 is disordered.

The protein belongs to the glycosyl hydrolase 13 family.

It carries out the reaction Hydrolysis of (1-&gt;6)-alpha-D-glucosidic linkages to branches with degrees of polymerization of three or four glucose residues in limit dextrin.. It participates in glycan degradation; glycogen degradation. In terms of biological role, removes maltotriose and maltotetraose chains that are attached by 1,6-alpha-linkage to the limit dextrin main chain, generating a debranched limit dextrin. The protein is Glycogen debranching enzyme of Escherichia coli O1:K1 / APEC.